Reading from the N-terminus, the 664-residue chain is Cyclic nucleotide-gated channel alpha-2 (664 aa).

Residues 1-11 are compositionally biased toward polar residues; the sequence is MTEKTNGVKSS. The segment at 1 to 49 is disordered; it reads MTEKTNGVKSSPANNHNHHAPPAIKANGKDDHRTSSRPHSAADDDTSSE. The Cytoplasmic portion of the chain corresponds to 1-144; it reads MTEKTNGVKS…PAGDWYYCWL (144 aa). A compositionally biased stretch (low complexity) spans 12–23; sequence PANNHNHHAPPA. The helical transmembrane segment at 145-166 threads the bilayer; the sequence is FVIAMPVLYNWCLLVARACFSD. At 167–176 the chain is on the extracellular side; the sequence is LQKGYYLVWL. The chain crosses the membrane as a helical span at residues 177 to 197; sequence VLDYVSDVVYIADLFIRLRTG. The Cytoplasmic portion of the chain corresponds to 198–222; that stretch reads FLEQGLLVKDTKKLRDNYIHTLQFK. The helical transmembrane segment at 223–241 threads the bilayer; sequence LDVASIIPTDLIYFAVDIH. Topologically, residues 242–246 are extracellular; sequence SPEVR. Residues 247 to 265 traverse the membrane as a helical segment; that stretch reads FNRLLHFARMFEFFDRTET. The Cytoplasmic portion of the chain corresponds to 266 to 272; sequence RTNYPNI. Positions 270–378 are ion conduction pathway; the sequence is PNIFRISNLV…GNVGSMISNM (109 aa). The helical transmembrane segment at 273-296 threads the bilayer; it reads FRISNLVLYILVIIHWNACIYYAI. Over 297–319 the chain is Extracellular; it reads SKSIGFGVDTWVYPNITDPEYGY. A run of 2 helical transmembrane segments spans residues 320 to 354 and 355 to 379; these read LARE…LFVI and FDFL…SNMN. The tract at residues 337-340 is selectivity filter; sequence TIGE. The interval 380 to 456 is C-linker; it reads ATRAEFQAKI…STLKKVRIFH (77 aa). The Cytoplasmic segment spans residues 380–664; sequence ATRAEFQAKI…SPELAAADEP (285 aa). The cyclic nucleotide-binding domain stretch occupies residues 460 to 580; the sequence is AGLLVELVLK…EERGREILMK (121 aa). 3',5'-cyclic GMP-binding residues include Gly-520, Ser-523, Arg-536, and Thr-537. 3',5'-cyclic AMP is bound by residues Arg-536 and Thr-537. A coiled-coil region spans residues 597-651; that stretch reads VQEKLGQLETNMETLYTRFGRLLAEYTGAQQKLKQRITVLETKMKQNNEDDYLSD. The tract at residues 641–664 is disordered; it reads KQNNEDDYLSDGMNSPELAAADEP.

This sequence belongs to the cyclic nucleotide-gated cation channel (TC 1.A.1.5) family. CNGA2 subfamily. The olfactory cyclic nucleotide-gated channel is an heterotetramer composed of CNGA2, CNGA4 and CNGB1b subunits with 2:1:1 stoichiometry.

Its subcellular location is the cell projection. It localises to the cilium membrane. It carries out the reaction Ca(2+)(in) = Ca(2+)(out). The enzyme catalyses Na(+)(in) = Na(+)(out). The catalysed reaction is K(+)(in) = K(+)(out). It catalyses the reaction NH4(+)(in) = NH4(+)(out). It carries out the reaction Rb(+)(in) = Rb(+)(out). The enzyme catalyses Li(+)(in) = Li(+)(out). The catalysed reaction is Cs(+)(in) = Cs(+)(out). Its function is as follows. Pore-forming subunit of the olfactory cyclic nucleotide-gated channel. Operates in the cilia of olfactory sensory neurons where chemical stimulation of the odorant is converted to an electrical signal. Mediates odorant-induced cAMP-dependent Ca(2+) influx triggering neuron depolarization. The rise of intracellular Ca(2+) levels potentiates the olfactory response by activating Ca(2+)-dependent Cl(-) channels, but it also serves as a negative feedback signal to desensitize the channel for rapid adaptation to odorants. Conducts cAMP- and cGMP-gated ion currents, with permeability for monovalent and divalent cations. In Homo sapiens (Human), this protein is Cyclic nucleotide-gated channel alpha-2.